Consider the following 1770-residue polypeptide: Transposon Ty2-DR3 Gag-Pol polyprotein (1770 aa).

Polar residues-rich tracts occupy residues 1–11 (MESQQLHQNPH), 19–39 (ASVTSKEVPSNQDPLAVSASN), 49–60 (KVNSQQETTPGT), 366–390 (VSRTSPNTTNTKVTSRNYHRTNSSK), 399–408 (IATSSKFSRV), and 415–435 (ESTVSSQYLSDDNELSLGQQQ). 2 disordered regions span residues 1-89 (MESQ…QQHG) and 355-449 (SQYK…SNDE). Residues 295-397 (ENNINVSDRL…SSKPRAAKAH (103 aa)) are RNA-binding. Asp457 (for protease activity; shared with dimeric partner) is an active-site residue. The integrase-type zinc finger-like stretch occupies residues 579–636 (NVNKSKSVNKYPYPLIHRMLGHANFRSIQKSLKKNAVTYLKESDIEWSNASTYQCPDC). The region spanning 656 to 831 (ESYEPFQYLH…AGLDITTILP (176 aa)) is the Integrase catalytic domain. Residues Asp667 and Asp732 each contribute to the Mg(2+) site. Disordered stretches follow at residues 1005–1038 (GGTIESDTTSPRHSSTFTARNQKRPGSPNDMIDL) and 1057–1205 (GGTE…TEIE). 2 stretches are compositionally biased toward polar residues: residues 1009-1024 (ESDTTSPRHSSTFTAR) and 1065-1082 (QRNSDTNIKYRTTNSTPS). Positions 1193 to 1227 (KKRSLEDNETEIEVSRDTWNNKNMRSLEPPRSKKR) match the Bipartite nuclear localization signal motif. Residues 1353-1491 (NDYYITQLDI…DILGLEIKYQ (139 aa)) enclose the Reverse transcriptase Ty1/copia-type domain. Residues Asp1361, Asp1442, Asp1443, Asp1625, Glu1667, and Asp1700 each coordinate Mg(2+). An RNase H Ty1/copia-type domain is found at 1625–1767 (DASYGNQPYY…IKTFKLLTNK (143 aa)).

As to quaternary structure, the capsid protein forms a homotrimer, from which the VLPs are assembled. The protease is a homodimer, whose active site consists of two apposed aspartic acid residues. Post-translationally, initially, virus-like particles (VLPs) are composed of the structural unprocessed proteins Gag and Gag-Pol, and also contain the host initiator methionine tRNA (tRNA(i)-Met) which serves as a primer for minus-strand DNA synthesis, and a dimer of genomic Ty RNA. Processing of the polyproteins occurs within the particle and proceeds by an ordered pathway, called maturation. First, the protease (PR) is released by autocatalytic cleavage of the Gag-Pol polyprotein, and this cleavage is a prerequisite for subsequent processing at the remaining sites to release the mature structural and catalytic proteins. Maturation takes place prior to the RT reaction and is required to produce transposition-competent VLPs.

The protein localises to the cytoplasm. It is found in the nucleus. The enzyme catalyses DNA(n) + a 2'-deoxyribonucleoside 5'-triphosphate = DNA(n+1) + diphosphate. It carries out the reaction Endonucleolytic cleavage to 5'-phosphomonoester.. In terms of biological role, capsid protein (CA) is the structural component of the virus-like particle (VLP), forming the shell that encapsulates the retrotransposons dimeric RNA genome. The particles are assembled from trimer-clustered units and there are holes in the capsid shells that allow for the diffusion of macromolecules. CA also has nucleocapsid-like chaperone activity, promoting primer tRNA(i)-Met annealing to the multipartite primer-binding site (PBS), dimerization of Ty2 RNA and initiation of reverse transcription. Its function is as follows. The aspartyl protease (PR) mediates the proteolytic cleavages of the Gag and Gag-Pol polyproteins after assembly of the VLP. Functionally, reverse transcriptase/ribonuclease H (RT) is a multifunctional enzyme that catalyzes the conversion of the retro-elements RNA genome into dsDNA within the VLP. The enzyme displays a DNA polymerase activity that can copy either DNA or RNA templates, and a ribonuclease H (RNase H) activity that cleaves the RNA strand of RNA-DNA heteroduplexes during plus-strand synthesis and hydrolyzes RNA primers. The conversion leads to a linear dsDNA copy of the retrotransposon that includes long terminal repeats (LTRs) at both ends. Integrase (IN) targets the VLP to the nucleus, where a subparticle preintegration complex (PIC) containing at least integrase and the newly synthesized dsDNA copy of the retrotransposon must transit the nuclear membrane. Once in the nucleus, integrase performs the integration of the dsDNA into the host genome. This chain is Transposon Ty2-DR3 Gag-Pol polyprotein (TY2B-DR3), found in Saccharomyces cerevisiae (strain ATCC 204508 / S288c) (Baker's yeast).